A 284-amino-acid polypeptide reads, in one-letter code: Pantothenate synthetase (284 aa).

30 to 37 (MGNLHEGH) provides a ligand contact to ATP. His-37 serves as the catalytic Proton donor. Gln-61 contributes to the (R)-pantoate binding site. Beta-alanine is bound at residue Gln-61. Residue 149 to 152 (GEKD) coordinates ATP. Gln-155 is a (R)-pantoate binding site. Residues Val-178 and 186–189 (LSSR) contribute to the ATP site.

The protein belongs to the pantothenate synthetase family. In terms of assembly, homodimer.

It is found in the cytoplasm. The catalysed reaction is (R)-pantoate + beta-alanine + ATP = (R)-pantothenate + AMP + diphosphate + H(+). It participates in cofactor biosynthesis; (R)-pantothenate biosynthesis; (R)-pantothenate from (R)-pantoate and beta-alanine: step 1/1. Its function is as follows. Catalyzes the condensation of pantoate with beta-alanine in an ATP-dependent reaction via a pantoyl-adenylate intermediate. The protein is Pantothenate synthetase of Yersinia enterocolitica serotype O:8 / biotype 1B (strain NCTC 13174 / 8081).